A 360-amino-acid polypeptide reads, in one-letter code: MTDLDTLERDLLAQVGAASDEAALDAVRVAALGKKGSVSDLLKTLGSMTPEERKERGPLINGLRDRVQGAVTARKTELAEAALEARLASERVDVTLPVREAPEVRGRIHPISQVIDEITAIFADMGFAVAEGPDIETDELNFTALNFPPGHPAREMHDTFFLAPDRDGKRKVLRTHTSPVQVRTMRAQTPPIRVIIPGRTYRHDSDQTHTPMFHQVEGLVIDTSANIANLKWVLEEFCKAFFEVDGVKMRFRPSFFPFTEPSAEVDIQCSRKGGEIRFGEGDDWLEILGCGMVHPNVLRNCGLDPDAVQGFAFGVGIDRIAMLKYGMPDLRPFFEADVRWLDHYGFRPLDVPSLVGGLTA.

Glutamate 260 contacts Mg(2+).

This sequence belongs to the class-II aminoacyl-tRNA synthetase family. Phe-tRNA synthetase alpha subunit type 1 subfamily. In terms of assembly, tetramer of two alpha and two beta subunits. It depends on Mg(2+) as a cofactor.

It localises to the cytoplasm. It carries out the reaction tRNA(Phe) + L-phenylalanine + ATP = L-phenylalanyl-tRNA(Phe) + AMP + diphosphate + H(+). The sequence is that of Phenylalanine--tRNA ligase alpha subunit from Methylobacterium radiotolerans (strain ATCC 27329 / DSM 1819 / JCM 2831 / NBRC 15690 / NCIMB 10815 / 0-1).